The following is a 234-amino-acid chain: Large ribosomal subunit protein uL1 (234 aa).

The protein belongs to the universal ribosomal protein uL1 family. As to quaternary structure, part of the 50S ribosomal subunit.

Its function is as follows. Binds directly to 23S rRNA. The L1 stalk is quite mobile in the ribosome, and is involved in E site tRNA release. In terms of biological role, protein L1 is also a translational repressor protein, it controls the translation of the L11 operon by binding to its mRNA. The polypeptide is Large ribosomal subunit protein uL1 (Bdellovibrio bacteriovorus (strain ATCC 15356 / DSM 50701 / NCIMB 9529 / HD100)).